The following is a 414-amino-acid chain: Secernin-1 (414 aa).

Ala-2 carries the N-acetylalanine modification. Residue Cys-9 is part of the active site.

Belongs to the peptidase C69 family. Secernin subfamily.

It localises to the cytoplasm. Its function is as follows. Regulates exocytosis in mast cells. Increases both the extent of secretion and the sensitivity of mast cells to stimulation with calcium. This is Secernin-1 (SCRN1) from Bos taurus (Bovine).